A 212-amino-acid chain; its full sequence is Small ribosomal subunit protein uS5 (212 aa).

In terms of domain architecture, S5 DRBM spans 48 to 111; the sequence is LDDEVLDINM…EVAKLNIIDV (64 aa).

It belongs to the universal ribosomal protein uS5 family. As to quaternary structure, part of the 30S ribosomal subunit. Contacts protein S4.

Its function is as follows. With S4 and S12 plays an important role in translational accuracy. This is Small ribosomal subunit protein uS5 from Halobacterium salinarum (strain ATCC 700922 / JCM 11081 / NRC-1) (Halobacterium halobium).